The chain runs to 100 residues: Urease subunit gamma (100 aa).

It belongs to the urease gamma subunit family. In terms of assembly, heterotrimer of UreA (gamma), UreB (beta) and UreC (alpha) subunits. Three heterotrimers associate to form the active enzyme.

The protein localises to the cytoplasm. It carries out the reaction urea + 2 H2O + H(+) = hydrogencarbonate + 2 NH4(+). The protein operates within nitrogen metabolism; urea degradation; CO(2) and NH(3) from urea (urease route): step 1/1. The polypeptide is Urease subunit gamma (Prochlorococcus marinus (strain MIT 9313)).